A 246-amino-acid chain; its full sequence is NAD-dependent protein deacylase (246 aa).

In terms of domain architecture, Deacetylase sirtuin-type spans M1–D246. G21 to W41 is an NAD(+) binding site. The substrate site is built by Y66 and R69. Residue Q101 to D104 participates in NAD(+) binding. The Proton acceptor role is filled by H123. NAD(+)-binding positions include G191 to S193, N217 to E219, and A235.

It belongs to the sirtuin family. Class III subfamily.

It is found in the cytoplasm. The enzyme catalyses N(6)-acetyl-L-lysyl-[protein] + NAD(+) + H2O = 2''-O-acetyl-ADP-D-ribose + nicotinamide + L-lysyl-[protein]. The catalysed reaction is N(6)-succinyl-L-lysyl-[protein] + NAD(+) + H2O = 2''-O-succinyl-ADP-D-ribose + nicotinamide + L-lysyl-[protein]. In terms of biological role, NAD-dependent lysine deacetylase and desuccinylase that specifically removes acetyl and succinyl groups on target proteins. Modulates the activities of several proteins which are inactive in their acylated form. This chain is NAD-dependent protein deacylase, found in Deinococcus radiodurans (strain ATCC 13939 / DSM 20539 / JCM 16871 / CCUG 27074 / LMG 4051 / NBRC 15346 / NCIMB 9279 / VKM B-1422 / R1).